Reading from the N-terminus, the 131-residue chain is Translation initiation factor 5A (131 aa).

Lys37 is modified (hypusine).

It belongs to the eIF-5A family.

It is found in the cytoplasm. Functionally, functions by promoting the formation of the first peptide bond. The polypeptide is Translation initiation factor 5A (eIF5A) (Methanococcus maripaludis (strain C6 / ATCC BAA-1332)).